A 209-amino-acid chain; its full sequence is 3-dehydroquinate dehydratase (209 aa).

Residues serine 6, 25–27 (ELR), and arginine 55 contribute to the 3-dehydroquinate site. Histidine 109 (proton donor/acceptor) is an active-site residue. The Schiff-base intermediate with substrate role is filled by lysine 134. Residues arginine 172 and glutamine 195 each coordinate 3-dehydroquinate.

It belongs to the type-I 3-dehydroquinase family. As to quaternary structure, homodimer.

The enzyme catalyses 3-dehydroquinate = 3-dehydroshikimate + H2O. The protein operates within metabolic intermediate biosynthesis; chorismate biosynthesis; chorismate from D-erythrose 4-phosphate and phosphoenolpyruvate: step 3/7. In terms of biological role, involved in the third step of the chorismate pathway, which leads to the biosynthesis of aromatic amino acids. Catalyzes the cis-dehydration of 3-dehydroquinate (DHQ) and introduces the first double bond of the aromatic ring to yield 3-dehydroshikimate. This is 3-dehydroquinate dehydratase from Methanoregula boonei (strain DSM 21154 / JCM 14090 / 6A8).